We begin with the raw amino-acid sequence, 78 residues long: Large ribosomal subunit protein bL28 (78 aa).

This sequence belongs to the bacterial ribosomal protein bL28 family.

This Proteus mirabilis (strain HI4320) protein is Large ribosomal subunit protein bL28.